A 453-amino-acid polypeptide reads, in one-letter code: MWSILKAVRENPEILYESQRRRGLSVDIVDRAIELDRKWREELKRVNQLRKRRNELARAVKEAKGEERAKVIEEAKAVSEEVKRAEEELKRLEAELEEVLLSIPNIIHESVPVGKDDSENVPIKYWGKAKVYFEDVDAFVEMTQGMAEYEVTDVKPIGHADAVEIFGWADLERAAKVAGARFYYLLNDLVWLDFALTMYALDFLRKEDFTIVSPPYMMRREAYSGVTAFSDFEEVIYKVEDEDLYLIATSEHPIAAMHMREVLEERELPLLYAGVSPCFRKEAGAHGKDTKGIFRVHQFNKVEQFVFCLPEQSWEWHEKLIENVEKLWQGLGIPYRIVNICTGDLGIVAAKKYDLEAWMPAQAKYREMVSCSNCTDWQSYRLDIRFAEERGKPSKGFVHTLNSTAIATTRAITAIIENFQLEDGRVEIPRVLRKYLEPIESAPKDFIMPAKSQ.

Residue threonine 249 to glutamate 251 coordinates L-serine. Residues arginine 280 to glutamate 282 and valine 296 contribute to the ATP site. An L-serine-binding site is contributed by glutamate 303. Glutamate 367 to serine 370 contributes to the ATP binding site. Threonine 404 contributes to the L-serine binding site.

Belongs to the class-II aminoacyl-tRNA synthetase family. Type-1 seryl-tRNA synthetase subfamily. In terms of assembly, homodimer. The tRNA molecule binds across the dimer.

Its subcellular location is the cytoplasm. The catalysed reaction is tRNA(Ser) + L-serine + ATP = L-seryl-tRNA(Ser) + AMP + diphosphate + H(+). The enzyme catalyses tRNA(Sec) + L-serine + ATP = L-seryl-tRNA(Sec) + AMP + diphosphate + H(+). It functions in the pathway aminoacyl-tRNA biosynthesis; selenocysteinyl-tRNA(Sec) biosynthesis; L-seryl-tRNA(Sec) from L-serine and tRNA(Sec): step 1/1. Its function is as follows. Catalyzes the attachment of serine to tRNA(Ser). Is also able to aminoacylate tRNA(Sec) with serine, to form the misacylated tRNA L-seryl-tRNA(Sec), which will be further converted into selenocysteinyl-tRNA(Sec). This Archaeoglobus fulgidus (strain ATCC 49558 / DSM 4304 / JCM 9628 / NBRC 100126 / VC-16) protein is Serine--tRNA ligase.